The following is a 505-amino-acid chain: Probable RNA exonuclease NGL3 (505 aa).

Disordered regions lie at residues 1–75 (MDSQ…FPTP) and 334–369 (RNGE…SFTA). The segment covering 10–23 (SPSQKESSSTSGLV) has biased composition (polar residues). Positions 36-54 (HRDQLSVDQIKKIREERAQ) are enriched in basic and acidic residues. At serine 62 the chain carries Phosphoserine. Residues 338-347 (ESDQDDEECD) are compositionally biased toward acidic residues.

Belongs to the CCR4/nocturin family.

The polypeptide is Probable RNA exonuclease NGL3 (NGL3) (Saccharomyces cerevisiae (strain ATCC 204508 / S288c) (Baker's yeast)).